A 72-amino-acid polypeptide reads, in one-letter code: Heat-stable enterotoxin C (72 aa).

The signal sequence occupies residues 1–19 (MKKIVFVLTLMLFSFGTLG). 3 cysteine pairs are disulfide-bonded: Cys-60/Cys-65, Cys-61/Cys-69, and Cys-64/Cys-72.

This sequence belongs to the heat-stable enterotoxin family.

Its subcellular location is the secreted. Toxin which activates the particulate form of guanylate cyclase and increases cyclic GMP levels within the host intestinal epithelial cells. Highly toxic. This Yersinia enterocolitica protein is Heat-stable enterotoxin C (ystC).